We begin with the raw amino-acid sequence, 961 residues long: E3 ubiquitin-protein ligase TRIM37 (961 aa).

An N-acetylmethionine modification is found at Met-1. The RING-type; degenerate zinc-finger motif lies at 15–55; it reads CFICMEKLRDARLCPHCSKLCCFSCIRRWLTEQRAQCPHCR. Residues 90–132 form a B box-type zinc finger; the sequence is NEKDKCENHHEKLSVFCWTCKKCICHQCALWGGMHGGHTFKPL. 4 residues coordinate Zn(2+): Cys-95, His-98, Cys-117, and His-124. A coiled-coil region spans residues 132 to 234; the sequence is LAEIYEQHVT…VEHQLRSCSK (103 aa). The 128-residue stretch at 276-403 folds into the MATH domain; sequence YDSATFVLEN…NDTVILRFQV (128 aa). Residues 419–450 adopt a coiled-coil conformation; it reads ITQLEAAQTGYIQQINNLKERLTIELSRTQKS. 5 disordered regions span residues 447 to 514, 529 to 561, 645 to 665, 776 to 811, and 874 to 961; these read TQKS…HHEL, VNHLDGSSSSASSTATSNTEENDIDEETMSGEN, SLLQPTASYSRKDKDQRKQQA, AVDSGENSRSKGDCQVLAEGSSGSSQSGSRHSSPRA, and LESH…GGGR. Position 454 is a phosphoserine (Ser-454). The segment covering 504 to 514 has biased composition (basic and acidic residues); the sequence is KIQNEDYHHEL. The span at 535–545 shows a compositional bias: low complexity; sequence SSSSASSTATS. Residues 548–561 show a composition bias toward acidic residues; sequence EENDIDEETMSGEN. A compositionally biased stretch (basic and acidic residues) spans 776 to 787; that stretch reads AVDSGENSRSKG. Low complexity predominate over residues 795-806; the sequence is GSSGSSQSGSRH. Acidic residues predominate over residues 903 to 915; that stretch reads SDIECDTENEEQE.

It belongs to the TRIM/RBCC family. As to quaternary structure, associates with the PRC2/EED-EZH2 complex. Post-translationally, auto-ubiquitinated. Highly expressed in testis and brain. In embryonic tissues, expressed in epithelia, including ducts of the developing pancreas, epithelium of the midgut and nasal epithelium. In adult, detected in the central and peripheral nervous systems, including enteric ganglia, retina and the adrenal medulla (at protein level).

The protein localises to the chromosome. The protein resides in the cytoplasm. It localises to the perinuclear region. It is found in the peroxisome membrane. It catalyses the reaction S-ubiquitinyl-[E2 ubiquitin-conjugating enzyme]-L-cysteine + [acceptor protein]-L-lysine = [E2 ubiquitin-conjugating enzyme]-L-cysteine + N(6)-ubiquitinyl-[acceptor protein]-L-lysine.. The protein operates within protein modification; protein ubiquitination. Functionally, E3 ubiquitin-protein ligase required to prevent centriole reduplication. Probably acts by ubiquitinating positive regulators of centriole reduplication. Mediates monoubiquitination of 'Lys-119' of histone H2A (H2AK119Ub), a specific tag for epigenetic transcriptional repression: associates with some Polycomb group (PcG) multiprotein PRC2-like complex and mediates repression of target genes. Also acts as a positive regulator of peroxisome import by mediating monoubiquitination of PEX5 at 'Lys-472': monoubiquitination promotes PEX5 stabilitation by preventing its polyubiquitination and degradation by the proteasome. In Mus musculus (Mouse), this protein is E3 ubiquitin-protein ligase TRIM37.